Consider the following 174-residue polypeptide: NADPH-dependent 7-cyano-7-deazaguanine reductase (174 aa).

The Thioimide intermediate role is filled by Cys-72. Asp-79 serves as the catalytic Proton donor. Substrate is bound by residues 94-96 (VES) and 113-114 (HE).

The protein belongs to the GTP cyclohydrolase I family. QueF type 1 subfamily.

The protein localises to the cytoplasm. The enzyme catalyses 7-aminomethyl-7-carbaguanine + 2 NADP(+) = 7-cyano-7-deazaguanine + 2 NADPH + 3 H(+). Its pathway is tRNA modification; tRNA-queuosine biosynthesis. Functionally, catalyzes the NADPH-dependent reduction of 7-cyano-7-deazaguanine (preQ0) to 7-aminomethyl-7-deazaguanine (preQ1). This Synechococcus elongatus (strain ATCC 33912 / PCC 7942 / FACHB-805) (Anacystis nidulans R2) protein is NADPH-dependent 7-cyano-7-deazaguanine reductase.